The sequence spans 644 residues: N-acetylgalactosaminyltransferase 4 (644 aa).

Residues 1 to 13 (MAIKKRYVKRLLR) are Cytoplasmic-facing. The helical; Signal-anchor for type II membrane protein transmembrane segment at 14–34 (KVVLLLVVIVTVSLVTTLVVE) threads the bilayer. At 35 to 644 (RRMKNAAELT…MLDTFYDGLK (610 aa)) the chain is on the lumenal side. 2 N-linked (GlcNAc...) asparagine glycosylation sites follow: asparagine 157 and asparagine 179. The catalytic subdomain A stretch occupies residues 177 to 288 (LPNISVIFIF…YNWLPPLIEP (112 aa)). Residues aspartate 218 and arginine 249 each contribute to the substrate site. A Mn(2+)-binding site is contributed by aspartate 272. Serine 273 provides a ligand contact to substrate. Histidine 274 contacts Mn(2+). A catalytic subdomain B region spans residues 345-407 (PYRSPVMMGG…PCSRVAHIFR (63 aa)). Substrate is bound at residue tryptophan 376. Histidine 404 lines the Mn(2+) pocket. Position 407 (arginine 407) interacts with substrate. In terms of domain architecture, Ricin B-type lectin spans 496–629 (AAGIIQNVAN…GNDRQRWEFG (134 aa)). A disulfide bridge connects residues cysteine 509 and cysteine 526. 2 N-linked (GlcNAc...) asparagine glycosylation sites follow: asparagine 529 and asparagine 565. Cystine bridges form between cysteine 556/cysteine 573 and cysteine 600/cysteine 617. N-linked (GlcNAc...) asparagine glycosylation is present at asparagine 632.

This sequence belongs to the glycosyltransferase 2 family. GalNAc-T subfamily. Mn(2+) is required as a cofactor. In terms of tissue distribution, expressed in developing oocytes and egg chambers. During embryonic stages 9-11, expressed in the primordium of the foregut, midgut and hindgut. During embryonic stages 12-13, shows specific expression in the proventriculus that continues until the end of embryogenesis. In third instar larvae, ubiquitously expressed in wing, eye-antennal, leg and haltere imaginal disks.

The protein localises to the golgi apparatus membrane. The catalysed reaction is L-seryl-[protein] + UDP-N-acetyl-alpha-D-galactosamine = a 3-O-[N-acetyl-alpha-D-galactosaminyl]-L-seryl-[protein] + UDP + H(+). It catalyses the reaction L-threonyl-[protein] + UDP-N-acetyl-alpha-D-galactosamine = a 3-O-[N-acetyl-alpha-D-galactosaminyl]-L-threonyl-[protein] + UDP + H(+). The protein operates within protein modification; protein glycosylation. In terms of biological role, glycopeptide transferase involved in O-linked oligosaccharide biosynthesis, which catalyzes the transfer of an N-acetyl-D-galactosamine residue to an already glycosylated peptide. In contrast to other proteins of the family, it does not act as a peptide transferase that transfers GalNAc onto serine or threonine residue on the protein receptor, but instead requires the prior addition of a GalNAc on a peptide before adding additional GalNAc moieties. Some peptide transferase activity is however not excluded, considering that its appropriate peptide substrate may remain unidentified. Prefers the diglycosylated Muc5AC-3/13 as substrate. The polypeptide is N-acetylgalactosaminyltransferase 4 (Drosophila melanogaster (Fruit fly)).